The primary structure comprises 302 residues: Probable lipid kinase YegS-like (302 aa).

The DAGKc domain maps to 1 to 129 (MDKDKVLLVL…IDLGEVNGKL (129 aa)). Residues Thr-39, 65–71 (GDGTLRE), and Thr-92 contribute to the ATP site. Mg(2+)-binding residues include Arg-210, Asp-213, and Leu-215. Glu-268 acts as the Proton acceptor in catalysis.

Belongs to the diacylglycerol/lipid kinase family. YegS lipid kinase subfamily. Mg(2+) serves as cofactor. Ca(2+) is required as a cofactor.

Its subcellular location is the cytoplasm. In terms of biological role, probably phosphorylates lipids; the in vivo substrate is unknown. The chain is Probable lipid kinase YegS-like from Pseudomonas aeruginosa (strain ATCC 15692 / DSM 22644 / CIP 104116 / JCM 14847 / LMG 12228 / 1C / PRS 101 / PAO1).